The primary structure comprises 224 residues: Uracil-DNA glycosylase 2 (224 aa).

Aspartate 64 (proton acceptor) is an active-site residue.

It belongs to the uracil-DNA glycosylase (UDG) superfamily. UNG family.

It localises to the cytoplasm. The enzyme catalyses Hydrolyzes single-stranded DNA or mismatched double-stranded DNA and polynucleotides, releasing free uracil.. In terms of biological role, excises uracil residues from the DNA which can arise as a result of misincorporation of dUMP residues by DNA polymerase or due to deamination of cytosine. The protein is Uracil-DNA glycosylase 2 of Listeria monocytogenes serotype 4b (strain F2365).